The following is a 476-amino-acid chain: Bifunctional protein HldE (476 aa).

Residues Met1–Thr318 form a ribokinase region. Residue Asn195 to Glu198 participates in ATP binding. Asp264 is an active-site residue. The tract at residues Met344–Gly476 is cytidylyltransferase.

In the N-terminal section; belongs to the carbohydrate kinase PfkB family. This sequence in the C-terminal section; belongs to the cytidylyltransferase family. As to quaternary structure, homodimer.

The enzyme catalyses D-glycero-beta-D-manno-heptose 7-phosphate + ATP = D-glycero-beta-D-manno-heptose 1,7-bisphosphate + ADP + H(+). It carries out the reaction D-glycero-beta-D-manno-heptose 1-phosphate + ATP + H(+) = ADP-D-glycero-beta-D-manno-heptose + diphosphate. It participates in nucleotide-sugar biosynthesis; ADP-L-glycero-beta-D-manno-heptose biosynthesis; ADP-L-glycero-beta-D-manno-heptose from D-glycero-beta-D-manno-heptose 7-phosphate: step 1/4. It functions in the pathway nucleotide-sugar biosynthesis; ADP-L-glycero-beta-D-manno-heptose biosynthesis; ADP-L-glycero-beta-D-manno-heptose from D-glycero-beta-D-manno-heptose 7-phosphate: step 3/4. Its function is as follows. Catalyzes the phosphorylation of D-glycero-D-manno-heptose 7-phosphate at the C-1 position to selectively form D-glycero-beta-D-manno-heptose-1,7-bisphosphate. Catalyzes the ADP transfer from ATP to D-glycero-beta-D-manno-heptose 1-phosphate, yielding ADP-D-glycero-beta-D-manno-heptose. This is Bifunctional protein HldE from Yersinia pseudotuberculosis serotype O:1b (strain IP 31758).